Here is a 266-residue protein sequence, read N- to C-terminus: Type III pantothenate kinase (266 aa).

15 to 22 (EIGNSSTS) is a binding site for ATP. Residues tyrosine 105 and 112 to 115 (GADR) contribute to the substrate site. Aspartate 114 acts as the Proton acceptor in catalysis. A K(+)-binding site is contributed by aspartate 135. ATP is bound at residue threonine 138. Threonine 191 contacts substrate.

Belongs to the type III pantothenate kinase family. As to quaternary structure, homodimer. The cofactor is NH4(+). It depends on K(+) as a cofactor.

It localises to the cytoplasm. It catalyses the reaction (R)-pantothenate + ATP = (R)-4'-phosphopantothenate + ADP + H(+). It participates in cofactor biosynthesis; coenzyme A biosynthesis; CoA from (R)-pantothenate: step 1/5. Functionally, catalyzes the phosphorylation of pantothenate (Pan), the first step in CoA biosynthesis. This chain is Type III pantothenate kinase, found in Chlorobium chlorochromatii (strain CaD3).